A 395-amino-acid polypeptide reads, in one-letter code: Chorismate synthase (395 aa).

R40 and R46 together coordinate NADP(+). Residues 134–136, 256–257, G301, 316–320, and R342 contribute to the FMN site; these read RAS, QA, and KPIST.

Belongs to the chorismate synthase family. In terms of assembly, homotetramer. Requires FMNH2 as cofactor.

The catalysed reaction is 5-O-(1-carboxyvinyl)-3-phosphoshikimate = chorismate + phosphate. It participates in metabolic intermediate biosynthesis; chorismate biosynthesis; chorismate from D-erythrose 4-phosphate and phosphoenolpyruvate: step 7/7. Functionally, catalyzes the anti-1,4-elimination of the C-3 phosphate and the C-6 proR hydrogen from 5-enolpyruvylshikimate-3-phosphate (EPSP) to yield chorismate, which is the branch point compound that serves as the starting substrate for the three terminal pathways of aromatic amino acid biosynthesis. This reaction introduces a second double bond into the aromatic ring system. The polypeptide is Chorismate synthase (Beutenbergia cavernae (strain ATCC BAA-8 / DSM 12333 / CCUG 43141 / JCM 11478 / NBRC 16432 / NCIMB 13614 / HKI 0122)).